A 760-amino-acid chain; its full sequence is Translocation protein SEC63 homolog (760 aa).

The Lumenal segment spans residues 1–14; that stretch reads MAGQQFQYDDSGNT. Residues 15 to 35 form a helical membrane-spanning segment; sequence FFYFLTSFVGLIVIPATYYLW. The Cytoplasmic portion of the chain corresponds to 36–69; it reads PRDQNAEQIRLKNIRKVYGRCMWYRLRLLKPQPN. A helical transmembrane segment spans residues 70–90; sequence IIPTVKKIVLLAGWALFLFLA. At 91–188 the chain is on the lumenal side; sequence YKVSKTDREY…LPAWIVDQKN (98 aa). Positions 104–165 constitute a J domain; that stretch reads NPYEVLNLDP…ESRKNWEEFG (62 aa). The helical transmembrane segment at 189–209 threads the bilayer; that stretch reads SILVLLVYGLAFMVILPVVVG. In terms of domain architecture, SEC63 1 spans 197–541; the sequence is GLAFMVILPV…LKKKPTPVLL (345 aa). Over 210–760 the chain is Cytoplasmic; it reads SWWYRSIRYS…EEEEEEEDDD (551 aa). Residues 492–617 form a disordered region; the sequence is AEEQPAEDGQ…DDEAEWQELQ (126 aa). The segment covering 518-536 has biased composition (basic residues); that stretch reads KGPKKTAKSKKKKPLKKKP. Phosphothreonine is present on Thr-537. Over residues 582–608 the composition is skewed to basic and acidic residues; sequence NRDSQSEKDDGSDRDSDREQDEKQNKD. The stretch at 597–635 forms a coiled coil; that stretch reads SDREQDEKQNKDDEAEWQELQQSIQRKERALLETKSKIT. An SEC63 2 domain is found at 637 to 714; sequence PVYSLYFPEE…GLDQIKPLKL (78 aa). The disordered stretch occupies residues 720-760; the sequence is KPVPENHPQWDTAIEGDEDQEDSEGFEDSFEEEEEEEEDDD. Acidic residues predominate over residues 733 to 760; it reads IEGDEDQEDSEGFEDSFEEEEEEEEDDD. 2 positions are modified to phosphoserine: Ser-742 and Ser-748.

In terms of assembly, the ER translocon complex consists of channel-forming core components SEC61A1, SEC61B and SEC61G and different auxiliary components such as SEC62 and SEC63. Widely expressed, with high levels in the liver.

It is found in the endoplasmic reticulum membrane. Functionally, mediates cotranslational and post-translational transport of certain precursor polypeptides across endoplasmic reticulum (ER). Proposed to play an auxiliary role in recognition of precursors with short and apolar signal peptides. May cooperate with SEC62 and HSPA5/BiP to facilitate targeting of small presecretory proteins into the SEC61 channel-forming translocon complex, triggering channel opening for polypeptide translocation to the ER lumen. Required for efficient PKD1/Polycystin-1 biogenesis and trafficking to the plasma membrane of the primary cilia. The protein is Translocation protein SEC63 homolog of Homo sapiens (Human).